A 154-amino-acid chain; its full sequence is Urease subunit alpha (154 aa).

The region spanning 38–154 is the Urease domain; it reads GGIDTHIHFI…ADEMDIQVAI (117 aa). 3 residues coordinate Ni(2+): His-43, His-45, and Lys-126. Lys-126 bears the N6-carboxylysine mark. His-128 lines the substrate pocket.

Belongs to the metallo-dependent hydrolases superfamily. Urease alpha subunit family. As to quaternary structure, heterotrimer of UreA (gamma), UreB (beta) and UreC (alpha) subunits. Three heterotrimers associate to form the active enzyme. The cofactor is Ni cation. Carboxylation allows a single lysine to coordinate two nickel ions.

The protein resides in the cytoplasm. The enzyme catalyses urea + 2 H2O + H(+) = hydrogencarbonate + 2 NH4(+). The protein operates within nitrogen metabolism; urea degradation; CO(2) and NH(3) from urea (urease route): step 1/1. This is Urease subunit alpha (ureC) from Photobacterium damselae subsp. damselae (Listonella damsela).